We begin with the raw amino-acid sequence, 416 residues long: Serine hydroxymethyltransferase (416 aa).

(6S)-5,6,7,8-tetrahydrofolate contacts are provided by residues leucine 121 and 125–127; that span reads GHL. Lysine 230 bears the N6-(pyridoxal phosphate)lysine mark.

It belongs to the SHMT family. In terms of assembly, homodimer. Pyridoxal 5'-phosphate serves as cofactor.

It is found in the cytoplasm. The enzyme catalyses (6R)-5,10-methylene-5,6,7,8-tetrahydrofolate + glycine + H2O = (6S)-5,6,7,8-tetrahydrofolate + L-serine. The protein operates within one-carbon metabolism; tetrahydrofolate interconversion. Its pathway is amino-acid biosynthesis; glycine biosynthesis; glycine from L-serine: step 1/1. Functionally, catalyzes the reversible interconversion of serine and glycine with tetrahydrofolate (THF) serving as the one-carbon carrier. This reaction serves as the major source of one-carbon groups required for the biosynthesis of purines, thymidylate, methionine, and other important biomolecules. Also exhibits THF-independent aldolase activity toward beta-hydroxyamino acids, producing glycine and aldehydes, via a retro-aldol mechanism. The protein is Serine hydroxymethyltransferase of Nitrosomonas europaea (strain ATCC 19718 / CIP 103999 / KCTC 2705 / NBRC 14298).